We begin with the raw amino-acid sequence, 358 residues long: Peptide chain release factor 1 (358 aa).

The residue at position 233 (Gln-233) is an N5-methylglutamine.

This sequence belongs to the prokaryotic/mitochondrial release factor family. In terms of processing, methylated by PrmC. Methylation increases the termination efficiency of RF1.

Its subcellular location is the cytoplasm. In terms of biological role, peptide chain release factor 1 directs the termination of translation in response to the peptide chain termination codons UAG and UAA. The polypeptide is Peptide chain release factor 1 (Staphylococcus aureus (strain MRSA252)).